We begin with the raw amino-acid sequence, 538 residues long: Putative cysteine ligase BshC (538 aa).

The stretch at 454 to 482 (LEKNAGFIQDQLQFLEKTVIRRIEEKENY) forms a coiled coil.

This sequence belongs to the BshC family.

Functionally, involved in bacillithiol (BSH) biosynthesis. May catalyze the last step of the pathway, the addition of cysteine to glucosamine malate (GlcN-Mal) to generate BSH. The protein is Putative cysteine ligase BshC of Bacillus licheniformis (strain ATCC 14580 / DSM 13 / JCM 2505 / CCUG 7422 / NBRC 12200 / NCIMB 9375 / NCTC 10341 / NRRL NRS-1264 / Gibson 46).